The following is a 618-amino-acid chain: MFDLEYQLKNLPDKPGVYLMKNNLGEIIYVGKAKILKNRVRQYFQKSQKHSEKVKAMVKNIEEFEYIITDSEIEALILECNLIKKYRPKYNILLKDDKHYPFIKVTLAEDFPRVVSTRKVTKDGSKYFGPYVDGSSVKDIIELIKKTFPIRTCKKNIVEGAKAIRPCLNYQIGLCKAPCAQYIKKSEYREIIDDVIKLLSGKHLDIVENFKLNMEKAAENLEFEKAAMLRDKINIIEKIGEKQKIILNNFDNEDYISLYSDGKDTCFQVFFLRNGKIVGREHFIIEDTFDTNSSTLISNFLKEFYGGTAYIPKTIYVPNIEDEALLEQWLTLKKESKSTIKIPIKGEKKNILVLVEKNAKTTLENFKLKYLQEKALYDNVLKDLKNILRLQEEPIRIEAFDISNIQGFDSVGSMVVFEKGRAKPSDYRRFKINTVKGADDYKSMKEILTRRFQHGLSEIKSIQDRKLEFSSGKFSVFPDLILMDGGKGQINIALEVLNTFNIDIPVCGMVKDNKHRTRGLIYNGEEIIINKYGSVMKFITRVQDEVHRFAISYHRSLRGKNSFHSLLDDIPNIGEKRKKDLLFNFKSIDNIKKATYEELLSIPSMDKKSAECVLEFFK.

A GIY-YIG domain is found at 13 to 92 (DKPGVYLMKN…IKKYRPKYNI (80 aa)). Residues 204-239 (LDIVENFKLNMEKAAENLEFEKAAMLRDKINIIEKI) form the UVR domain.

The protein belongs to the UvrC family. As to quaternary structure, interacts with UvrB in an incision complex.

Its subcellular location is the cytoplasm. Its function is as follows. The UvrABC repair system catalyzes the recognition and processing of DNA lesions. UvrC both incises the 5' and 3' sides of the lesion. The N-terminal half is responsible for the 3' incision and the C-terminal half is responsible for the 5' incision. The sequence is that of UvrABC system protein C from Clostridium botulinum (strain Kyoto / Type A2).